The sequence spans 226 residues: MDKVRTVSDSKRDFYTKHTRPINSVYRRVVEELMVEMHLLSVNSDFQYDPVYALGVVTSFQRFMQGYRPDADKESIFNALCQSVGGDPQQYRQDAERMIESAKQLSAQQLLFNLESASDSSSGENQILQTLIGIANAPKYKYTRLFAIGIYTILAETDPEMLKNTEKREEVVKQIAKVLHLPEEKMQKDLDLYRSNLEKMDQLLTVIEEALQADRKKREQQKIMDN.

The stretch at E183–A213 forms a coiled coil.

Belongs to the THF1 family.

Its function is as follows. May be involved in photosynthetic membrane biogenesis. This is Protein Thf1 from Gloeothece citriformis (strain PCC 7424) (Cyanothece sp. (strain PCC 7424)).